A 337-amino-acid polypeptide reads, in one-letter code: tRNA-dihydrouridine synthase B (337 aa).

FMN contacts are provided by residues P19–A21 and Q73. C103 acts as the Proton donor in catalysis. FMN-binding positions include K142, N203–D205, and G227–R228.

It belongs to the Dus family. DusB subfamily. The cofactor is FMN.

The catalysed reaction is a 5,6-dihydrouridine in tRNA + NAD(+) = a uridine in tRNA + NADH + H(+). The enzyme catalyses a 5,6-dihydrouridine in tRNA + NADP(+) = a uridine in tRNA + NADPH + H(+). In terms of biological role, catalyzes the synthesis of 5,6-dihydrouridine (D), a modified base found in the D-loop of most tRNAs, via the reduction of the C5-C6 double bond in target uridines. This is tRNA-dihydrouridine synthase B from Pseudomonas putida (strain ATCC 47054 / DSM 6125 / CFBP 8728 / NCIMB 11950 / KT2440).